A 632-amino-acid polypeptide reads, in one-letter code: MAU2 chromatid cohesion factor homolog (632 aa).

TPR repeat units lie at residues 453 to 486 (GGFYYVQGLHAFHKNSFHEAKRFLRETLKMANAE) and 493 to 526 (SCSLVLLSHVFLSIGNSKESMNMVTPAMQLASKI).

Belongs to the SCC4/mau-2 family. In terms of assembly, interacts with Nipped-B to form the cohesin loading complex.

The protein localises to the nucleus. The protein resides in the nucleoplasm. In terms of biological role, required for association of the cohesin complex with chromatin during interphase. Plays a role in sister chromatid cohesion and normal progression through prometaphase. The protein is MAU2 chromatid cohesion factor homolog of Drosophila simulans (Fruit fly).